The following is a 159-amino-acid chain: Ribosomal RNA large subunit methyltransferase H (159 aa).

S-adenosyl-L-methionine contacts are provided by residues Leu76, Gly108, and 127 to 132; that span reads FGKLTM.

It belongs to the RNA methyltransferase RlmH family. In terms of assembly, homodimer.

The protein resides in the cytoplasm. The catalysed reaction is pseudouridine(1915) in 23S rRNA + S-adenosyl-L-methionine = N(3)-methylpseudouridine(1915) in 23S rRNA + S-adenosyl-L-homocysteine + H(+). Specifically methylates the pseudouridine at position 1915 (m3Psi1915) in 23S rRNA. The sequence is that of Ribosomal RNA large subunit methyltransferase H from Lacticaseibacillus casei (strain BL23) (Lactobacillus casei).